A 247-amino-acid polypeptide reads, in one-letter code: GTP cyclohydrolase 1 type 2 homolog (247 aa).

A divalent metal cation is bound by residues histidine 63, histidine 64, aspartate 101, histidine 215, and glutamate 219.

The protein belongs to the GTP cyclohydrolase I type 2/NIF3 family. As to quaternary structure, homohexamer.

The polypeptide is GTP cyclohydrolase 1 type 2 homolog (Buchnera aphidicola subsp. Acyrthosiphon pisum (strain APS) (Acyrthosiphon pisum symbiotic bacterium)).